Here is a 213-residue protein sequence, read N- to C-terminus: Redox-sensing transcriptional repressor Rex (213 aa).

A DNA-binding region (H-T-H motif) is located at residues 18–57 (LYYRIFKRFHAEKIERANSKQIAEAIGIDSATVRRDFSYF). 92 to 97 (GIGNMG) contributes to the NAD(+) binding site.

This sequence belongs to the transcriptional regulatory Rex family. Homodimer.

Its subcellular location is the cytoplasm. In terms of biological role, modulates transcription in response to changes in cellular NADH/NAD(+) redox state. Binds to the promoter of the aldehyde-alcohol dehydrogenase adhE gene. Functions as a redox-dependent repressor of adhE expression. This chain is Redox-sensing transcriptional repressor Rex, found in Streptococcus pneumoniae (strain ATCC BAA-255 / R6).